We begin with the raw amino-acid sequence, 590 residues long: Aspartate--tRNA(Asp/Asn) ligase (590 aa).

Residue Glu-176 coordinates L-aspartate. The tract at residues 200–203 (QLFK) is aspartate. L-aspartate contacts are provided by Arg-222 and His-451. Residue 222 to 224 (RDE) coordinates ATP. Glu-485 provides a ligand contact to ATP. Arg-492 contacts L-aspartate. Residue 537–540 (GIDR) participates in ATP binding.

Belongs to the class-II aminoacyl-tRNA synthetase family. Type 1 subfamily. Homodimer.

The protein localises to the cytoplasm. The enzyme catalyses tRNA(Asx) + L-aspartate + ATP = L-aspartyl-tRNA(Asx) + AMP + diphosphate. Aspartyl-tRNA synthetase with relaxed tRNA specificity since it is able to aspartylate not only its cognate tRNA(Asp) but also tRNA(Asn). Reaction proceeds in two steps: L-aspartate is first activated by ATP to form Asp-AMP and then transferred to the acceptor end of tRNA(Asp/Asn). The polypeptide is Aspartate--tRNA(Asp/Asn) ligase (Ehrlichia ruminantium (strain Welgevonden)).